The following is a 689-amino-acid chain: Glycine--tRNA ligase beta subunit (689 aa).

The protein belongs to the class-II aminoacyl-tRNA synthetase family. Tetramer of two alpha and two beta subunits.

It localises to the cytoplasm. The catalysed reaction is tRNA(Gly) + glycine + ATP = glycyl-tRNA(Gly) + AMP + diphosphate. This Acinetobacter baumannii (strain AB307-0294) protein is Glycine--tRNA ligase beta subunit.